The chain runs to 131 residues: Small ribosomal subunit protein uS11 (131 aa).

This sequence belongs to the universal ribosomal protein uS11 family. Part of the 30S ribosomal subunit. Interacts with proteins S7 and S18. Binds to IF-3.

Its function is as follows. Located on the platform of the 30S subunit, it bridges several disparate RNA helices of the 16S rRNA. Forms part of the Shine-Dalgarno cleft in the 70S ribosome. In Natranaerobius thermophilus (strain ATCC BAA-1301 / DSM 18059 / JW/NM-WN-LF), this protein is Small ribosomal subunit protein uS11.